Consider the following 229-residue polypeptide: Zinc finger matrin-type protein 4 (229 aa).

Matrin-type zinc fingers lie at residues 14–44 (SYCKVCSAQLISESQRVAHYESRKHASKVRL), 72–106 (DKNKCCTLCNMSFTSAVVADSHYQGKIHAKRLKLL), 145–175 (RYCGLCAAWFNNPLMAQQHYEGKKHKKNAAR), and 198–228 (YRCTTCSVSLNSIEQYHAHLQGSKHQTNLKN).

It is found in the nucleus. This chain is Zinc finger matrin-type protein 4 (Zmat4), found in Mus musculus (Mouse).